A 440-amino-acid chain; its full sequence is Xylose isomerase (440 aa).

Catalysis depends on residues His99 and Asp102. Residues Glu230, Glu266, His269, Asp294, Asp305, Asp307, and Asp337 each coordinate Mg(2+).

It belongs to the xylose isomerase family. In terms of assembly, homotetramer. It depends on Mg(2+) as a cofactor.

The protein resides in the cytoplasm. The catalysed reaction is alpha-D-xylose = alpha-D-xylulofuranose. This chain is Xylose isomerase, found in Halalkalibacterium halodurans (strain ATCC BAA-125 / DSM 18197 / FERM 7344 / JCM 9153 / C-125) (Bacillus halodurans).